The sequence spans 286 residues: ATP-binding protein ChvD (286 aa).

One can recognise an ABC transporter domain in the interval 21–85 (KLQDMIDSQN…DLLLLDEPTN (65 aa)).

This sequence belongs to the ABC transporter superfamily.

Functionally, the induction of virG by growth under acidic conditions and by phosphate starvation, in the absence of plant inducers, is influenced by ChvD. This chain is ATP-binding protein ChvD (chvD), found in Rhizobium radiobacter (Agrobacterium tumefaciens).